The following is a 196-amino-acid chain: dTTP/UTP pyrophosphatase (196 aa).

Asp73 serves as the catalytic Proton acceptor.

This sequence belongs to the Maf family. YhdE subfamily. It depends on a divalent metal cation as a cofactor.

The protein localises to the cytoplasm. It carries out the reaction dTTP + H2O = dTMP + diphosphate + H(+). It catalyses the reaction UTP + H2O = UMP + diphosphate + H(+). In terms of biological role, nucleoside triphosphate pyrophosphatase that hydrolyzes dTTP and UTP. May have a dual role in cell division arrest and in preventing the incorporation of modified nucleotides into cellular nucleic acids. The sequence is that of dTTP/UTP pyrophosphatase from Myxococcus xanthus (strain DK1622).